Consider the following 888-residue polypeptide: Calcium-transporting ATPase 1 (888 aa).

Transmembrane regions (helical) follow at residues 53-75, 79-97, 246-266, and 283-303; these read IFAQINDVLVYVLIIAALISAFV, ADASIIALVVVLNAVIGVV, VGKYLGFVAVAICIVMFLIGF, and AVAAIPEGLPAIVSIVLAIGV. Ca(2+) contacts are provided by Val-284, Ala-285, Ile-287, and Glu-289. Asp-331 acts as the 4-aspartylphosphate intermediate in catalysis. 6 helical membrane passes run 675 to 695, 703 to 723, 747 to 767, 791 to 811, 831 to 851, and 865 to 885; these read ILFLLSCNFGEIITLFLAILL, PIHILWVNLITDTLPALSLGV, VPFLIFNGVVIGLLTLIAFIA, LLHAQTMAFVVLSFSQLVHSF, LVFSLLIGVLMQVCIISIPPL, and WGFVLLLSIIPLVVNEIIKLA. 2 residues coordinate Ca(2+): Asn-710 and Asp-714.

Belongs to the cation transport ATPase (P-type) (TC 3.A.3) family. Type IIA subfamily.

The protein localises to the cell membrane. It catalyses the reaction Ca(2+)(in) + ATP + H2O = Ca(2+)(out) + ADP + phosphate + H(+). Its activity is regulated as follows. Inhibited by cyclopiazonic acid (CPA). Catalyzes the hydrolysis of ATP coupled with the transport of calcium. In Bacillus cereus (strain ATCC 10987 / NRS 248), this protein is Calcium-transporting ATPase 1.